The following is a 98-amino-acid chain: MKIIAEIYRSPKEEGMYLYVKKEEGLGRVPEELLTLFGKPQQAMVLLLTPEKKLANADIGKVIESLNDKGYYLQLPPRDLVDAEAKRIRTLNSKLSGH.

One can recognise a YcgL domain in the interval 3-87; it reads IIAEIYRSPK…RDLVDAEAKR (85 aa).

The sequence is that of YcgL domain-containing protein CJA_2437 from Cellvibrio japonicus (strain Ueda107) (Pseudomonas fluorescens subsp. cellulosa).